Reading from the N-terminus, the 260-residue chain is Proteasome subunit alpha (260 aa).

The interval 231–260 (LLPEDFSPGQTEGGGDPAPESGDSKDAKDN) is disordered.

It belongs to the peptidase T1A family. The 20S proteasome core is composed of 14 alpha and 14 beta subunits that assemble into four stacked heptameric rings, resulting in a barrel-shaped structure. The two inner rings, each composed of seven catalytic beta subunits, are sandwiched by two outer rings, each composed of seven alpha subunits. The catalytic chamber with the active sites is on the inside of the barrel. Has a gated structure, the ends of the cylinder being occluded by the N-termini of the alpha-subunits. Is capped by the proteasome-associated ATPase, ARC.

It localises to the cytoplasm. It functions in the pathway protein degradation; proteasomal Pup-dependent pathway. Its activity is regulated as follows. The formation of the proteasomal ATPase ARC-20S proteasome complex, likely via the docking of the C-termini of ARC into the intersubunit pockets in the alpha-rings, may trigger opening of the gate for substrate entry. Interconversion between the open-gate and close-gate conformations leads to a dynamic regulation of the 20S proteasome proteolysis activity. Component of the proteasome core, a large protease complex with broad specificity involved in protein degradation. The sequence is that of Proteasome subunit alpha from Mycobacteroides abscessus (strain ATCC 19977 / DSM 44196 / CCUG 20993 / CIP 104536 / JCM 13569 / NCTC 13031 / TMC 1543 / L948) (Mycobacterium abscessus).